A 458-amino-acid polypeptide reads, in one-letter code: F-box/LRR-repeat protein At5g02910 (458 aa).

Positions 10–56 (MDFISSLPDEILHHILSSVPTKSAIRTSLLSKRWRYVWSETPSLSID) constitute an F-box domain. LRR repeat units lie at residues 57–84 (CRRA…HLHT), 86–112 (LLNR…SLES), 133–161 (KQLF…LSLS), 162–187 (NCTL…ELLY), 226–251 (CLRL…DLNI), 260–285 (TAGF…TIGG), 325–353 (KLLR…HLND), and 389–414 (ESNL…VVLL).

This chain is F-box/LRR-repeat protein At5g02910, found in Arabidopsis thaliana (Mouse-ear cress).